The following is a 186-amino-acid chain: Acireductone dioxygenase (186 aa).

Residues H89, H91, E95, and H134 each contribute to the Fe(2+) site. H89, H91, E95, and H134 together coordinate Ni(2+).

Belongs to the acireductone dioxygenase (ARD) family. The cofactor is Fe(2+). Ni(2+) is required as a cofactor.

Its subcellular location is the cytoplasm. It is found in the nucleus. The enzyme catalyses 1,2-dihydroxy-5-(methylsulfanyl)pent-1-en-3-one + O2 = 4-methylsulfanyl-2-oxobutanoate + formate + 2 H(+). The catalysed reaction is 1,2-dihydroxy-5-(methylsulfanyl)pent-1-en-3-one + O2 = 3-(methylsulfanyl)propanoate + CO + formate + 2 H(+). Its pathway is amino-acid biosynthesis; L-methionine biosynthesis via salvage pathway; L-methionine from S-methyl-5-thio-alpha-D-ribose 1-phosphate: step 5/6. In terms of biological role, catalyzes 2 different reactions between oxygen and the acireductone 1,2-dihydroxy-3-keto-5-methylthiopentene (DHK-MTPene) depending upon the metal bound in the active site. Fe-containing acireductone dioxygenase (Fe-ARD) produces formate and 2-keto-4-methylthiobutyrate (KMTB), the alpha-ketoacid precursor of methionine in the methionine recycle pathway. Ni-containing acireductone dioxygenase (Ni-ARD) produces methylthiopropionate, carbon monoxide and formate, and does not lie on the methionine recycle pathway. This Drosophila melanogaster (Fruit fly) protein is Acireductone dioxygenase.